The following is a 284-amino-acid chain: Tropomyosin alpha-1 chain (284 aa).

Residues 1–40 form a disordered region; sequence MDAIKKKMQMLKLDKENALDRAEQAEADKKGAEDKSKQLE. Residues 1–284 are a coiled coil; sequence MDAIKKKMQM…DHALNDMTSI (284 aa). A compositionally biased stretch (basic and acidic residues) spans 12–40; sequence KLDKENALDRAEQAEADKKGAEDKSKQLE.

The protein belongs to the tropomyosin family. Homodimer. Heterodimer of an alpha (TPM1, TPM3 or TPM4) and a beta (TPM2) chain.

The protein resides in the cytoplasm. Its subcellular location is the cytoskeleton. Its function is as follows. Binds to actin filaments in muscle and non-muscle cells. Plays a central role, in association with the troponin complex, in the calcium dependent regulation of vertebrate striated muscle contraction. Smooth muscle contraction is regulated by interaction with caldesmon. In non-muscle cells is implicated in stabilizing cytoskeleton actin filaments. This is Tropomyosin alpha-1 chain (tpm1) from Rana temporaria (European common frog).